Reading from the N-terminus, the 217-residue chain is AFG2-interacting ribosome maturation factor (217 aa).

As to quaternary structure, part of the 55LCC heterohexameric ATPase complex composed at least of AIRIM, AFG2A, AFG2B and CINP. Does not associate with pre-60S ribosomal particles. Post-translationally, phosphorylated on serines by CK2 kinase.

It localises to the nucleus. The protein localises to the cytoplasm. Its function is as follows. Part of the 55LCC heterohexameric ATPase complex which is chromatin-associated and promotes replisome proteostasis to maintain replication fork progression and genome stability. Required for replication fork progression, sister chromatid cohesion, and chromosome stability. The ATPase activity is specifically enhanced by replication fork DNA and is coupled to cysteine protease-dependent cleavage of replisome substrates in response to replication fork damage. Uses ATPase activity to process replisome substrates in S-phase, facilitating their proteolytic turnover from chromatin to ensure DNA replication and mitotic fidelity. Involved in the cytoplasmic maturation steps of pre-60S ribosomal particles by promoting the release of shuttling protein RSL24D1/RLP24 from the pre-ribosomal particles. This Mus musculus (Mouse) protein is AFG2-interacting ribosome maturation factor (Airim).